A 406-amino-acid chain; its full sequence is Argininosuccinate synthase (406 aa).

ATP contacts are provided by residues 12 to 20 and alanine 39; that span reads AYSGGLDTS. L-citrulline-binding residues include tyrosine 90 and serine 95. Glycine 120 provides a ligand contact to ATP. Threonine 122, asparagine 126, and aspartate 127 together coordinate L-aspartate. Residue asparagine 126 coordinates L-citrulline. 5 residues coordinate L-citrulline: arginine 130, serine 179, serine 188, glutamate 264, and tyrosine 276.

The protein belongs to the argininosuccinate synthase family. Type 1 subfamily. Homotetramer.

It localises to the cytoplasm. It carries out the reaction L-citrulline + L-aspartate + ATP = 2-(N(omega)-L-arginino)succinate + AMP + diphosphate + H(+). Its pathway is amino-acid biosynthesis; L-arginine biosynthesis; L-arginine from L-ornithine and carbamoyl phosphate: step 2/3. The polypeptide is Argininosuccinate synthase (Geotalea uraniireducens (strain Rf4) (Geobacter uraniireducens)).